Reading from the N-terminus, the 266-residue chain is 3-methyl-2-oxobutanoate hydroxymethyltransferase (266 aa).

The Mg(2+) site is built by aspartate 43 and aspartate 82. Residues 43–44 (DS), aspartate 82, and lysine 110 contribute to the 3-methyl-2-oxobutanoate site. Glutamate 112 provides a ligand contact to Mg(2+). Glutamate 179 functions as the Proton acceptor in the catalytic mechanism.

This sequence belongs to the PanB family. In terms of assembly, homodecamer; pentamer of dimers. It depends on Mg(2+) as a cofactor.

It is found in the cytoplasm. The enzyme catalyses 3-methyl-2-oxobutanoate + (6R)-5,10-methylene-5,6,7,8-tetrahydrofolate + H2O = 2-dehydropantoate + (6S)-5,6,7,8-tetrahydrofolate. The protein operates within cofactor biosynthesis; (R)-pantothenate biosynthesis; (R)-pantoate from 3-methyl-2-oxobutanoate: step 1/2. Its function is as follows. Catalyzes the reversible reaction in which hydroxymethyl group from 5,10-methylenetetrahydrofolate is transferred onto alpha-ketoisovalerate to form ketopantoate. This Psychrobacter cryohalolentis (strain ATCC BAA-1226 / DSM 17306 / VKM B-2378 / K5) protein is 3-methyl-2-oxobutanoate hydroxymethyltransferase.